Consider the following 1165-residue polypeptide: DNA-directed RNA polymerase subunit beta (1165 aa).

It belongs to the RNA polymerase beta chain family. In terms of assembly, the RNAP catalytic core consists of 2 alpha, 1 beta, 1 beta' and 1 omega subunit. When a sigma factor is associated with the core the holoenzyme is formed, which can initiate transcription.

It carries out the reaction RNA(n) + a ribonucleoside 5'-triphosphate = RNA(n+1) + diphosphate. In terms of biological role, DNA-dependent RNA polymerase catalyzes the transcription of DNA into RNA using the four ribonucleoside triphosphates as substrates. In Corynebacterium glutamicum (strain R), this protein is DNA-directed RNA polymerase subunit beta.